The following is a 1209-amino-acid chain: Putative lysine-specific demethylase JMJ16 (1209 aa).

The 42-residue stretch at 146–187 folds into the JmjN domain; it reads APVFYPSEEEFEDTLNYIAKIRPEAEKYGICRIVPPPSWKPP. Residues 217–224 carry the Nuclear localization signal motif; sequence MKKISKLP. In terms of domain architecture, JmjC spans 361–527; that stretch reads KYAKSGWNLN…HGQIAIELYC (167 aa). Residues histidine 407, glutamate 409, and histidine 495 each contribute to the Fe cation site. Residues cysteine 617, cysteine 620, cysteine 631, cysteine 633, cysteine 640, histidine 643, cysteine 648, and cysteine 650 each contribute to the Zn(2+) site. The segment at 617-667 adopts a C5HC2 zinc-finger fold; it reads CCICFFDLHLSAAGCRCSPEKYSCLTHVKELCSCPWVTKYFLFRYDIDELN. Residues 872 to 900 are disordered; sequence DTRNTISLPTNDQKTMRRDVPSSTSHAEV. Residues 875–884 are compositionally biased toward polar residues; that stretch reads NTISLPTNDQ. Positions 974–1032 constitute an FYR N-terminal domain; the sequence is VVRRINCNVEPLSYGCVLSGKSWCSRRAIFPKGFRSRVKYINILDPTNMCFYISEILDA. One can recognise an FYR C-terminal domain in the interval 1034–1124; that stretch reads RNSPLFMVYL…RVCTDYWDSR (91 aa).

It belongs to the JARID1 histone demethylase family. In terms of assembly, interacts with MMD1 in the nucleus of male meiocytes, especially on pachytene chromosomes. Requires Fe(2+) as cofactor. As to expression, confined to inflorescences.

It is found in the nucleus. It carries out the reaction N(6),N(6),N(6)-trimethyl-L-lysyl(4)-[histone H3] + 2-oxoglutarate + O2 = N(6),N(6)-dimethyl-L-lysyl(4)-[histone H3] + formaldehyde + succinate + CO2. The enzyme catalyses N(6),N(6)-dimethyl-L-lysyl(4)-[histone H3] + 2-oxoglutarate + O2 = N(6)-methyl-L-lysyl(4)-[histone H3] + formaldehyde + succinate + CO2. It catalyses the reaction N(6)-methyl-L-lysyl(4)-[histone H3] + 2-oxoglutarate + O2 = L-lysyl(4)-[histone H3] + formaldehyde + succinate + CO2. Functions as a histone H3 'Lys-4' (H3K4me) demethylase involved in the negative regulation of gene expression. Active on H3K4me1, H3K4me2 and H3K4me3. Not active on mono-, di- and trimethylated H3K9, H3K27 and H3K36 in somatic cells. However, also active on H3K9 when in complex with MMD1, a meiocyte-specific histone reader. Together with MMD1, promotes gene expression in male meiocytes in an H3K9me3-dependent manner, and contributes to meiotic chromosome condensation by triggering some condensin promoters (e.g. CAP-D3 and CAP-H). Together with JMJ14 and JMJ17, required for plant growth and development. Represses leaf senescence in an age-dependent manner by demethylating H3K4me3 activating histone marks at senescence-associated genes (SAGs) loci, including WRKY53 and SAG201, thus preventing their premature expression. This chain is Putative lysine-specific demethylase JMJ16, found in Arabidopsis thaliana (Mouse-ear cress).